Consider the following 305-residue polypeptide: tRNA uridine(34) hydroxylase (305 aa).

The 95-residue stretch at 126–220 (SDPEVIVIDT…YLEQIPPEES (95 aa)) folds into the Rhodanese domain. Cysteine 180 functions as the Cysteine persulfide intermediate in the catalytic mechanism.

Belongs to the TrhO family.

It catalyses the reaction uridine(34) in tRNA + AH2 + O2 = 5-hydroxyuridine(34) in tRNA + A + H2O. In terms of biological role, catalyzes oxygen-dependent 5-hydroxyuridine (ho5U) modification at position 34 in tRNAs. This is tRNA uridine(34) hydroxylase from Trichormus variabilis (strain ATCC 29413 / PCC 7937) (Anabaena variabilis).